The sequence spans 478 residues: Zinc metalloproteinase/disintegrin VMP-II (478 aa).

An N-terminal signal peptide occupies residues 1 to 20; it reads MIQVLLVTICLAVFPYQGSS. Positions 21–190 are excised as a propeptide; the sequence is IILESGNVND…KASQLNLTPE (170 aa). A Peptidase M12B domain is found at 197–393; that stretch reads RYIELVIVAD…HNPQCMLNEP (197 aa). The Ca(2+) site is built by glutamate 200 and aspartate 284. Intrachain disulfides connect cysteine 308–cysteine 388, cysteine 348–cysteine 372, and cysteine 350–cysteine 355. Histidine 333 contacts Zn(2+). Residue glutamate 334 is part of the active site. Residues histidine 337 and histidine 343 each contribute to the Zn(2+) site. Residues cysteine 388 and asparagine 391 each coordinate Ca(2+). Residues 394–405 constitute a propeptide that is removed on maturation; the sequence is LGTDTVSRNELL. One can recognise a Disintegrin domain in the interval 414-478; it reads GSPANPCCDA…ADCPRNRFHA (65 aa). 4 cysteine pairs are disulfide-bonded: cysteine 420-cysteine 443, cysteine 434-cysteine 440, cysteine 439-cysteine 464, and cysteine 452-cysteine 471. Positions 456 to 458 match the Cell attachment site motif; sequence RGD.

This sequence belongs to the venom metalloproteinase (M12B) family. P-II subfamily. P-IIe sub-subfamily. In terms of assembly, heterodimer; disulfide-linked (disintegrin). Zn(2+) is required as a cofactor. In terms of tissue distribution, expressed by the venom gland.

It localises to the secreted. Impairs hemostasis in the envenomed animal. Functionally, this recombinant protein inhibits ADP-induced platelet aggregation in whole human blood and this effect is concentration-dependent with an IC(50) of 34 nM. This Crotalus viridis viridis (Prairie rattlesnake) protein is Zinc metalloproteinase/disintegrin VMP-II.